A 611-amino-acid polypeptide reads, in one-letter code: Pleckstrin homology domain-containing family N member 1 (611 aa).

The segment at 1–45 is disordered; it reads MGNSHCVPQAPRRLRASFSRKPSLKGNREDSARMSAGLPGPEAAR. G2 is lipidated: N-myristoyl glycine. The tract at residues 61 to 100 is interaction with C1QBP; sequence TDILDLENQRENLEQPFLSVFKKGRRRVPVRNLGKVVHYA. 2 PH domains span residues 96–192 and 222–319; these read VVHY…TALL and AVCA…THRE. Y302 carries the post-translational modification Phosphotyrosine. Disordered regions lie at residues 323–424, 438–468, and 483–611; these read PLPG…PVTP, ESSP…TSHR, and MQSA…VQWI. The segment covering 341 to 350 has biased composition (low complexity); sequence GSLSSGGQTS. Residues 360 to 391 are compositionally biased toward polar residues; sequence STRTSHSLPESSVPSTVGCSSQHTPDQANSDR. A Phosphotyrosine modification is found at Y456. A compositionally biased stretch (low complexity) spans 498-509; the sequence is VPVSVPASDPRS. S559 is subject to Phosphoserine. Positions 570-585 are enriched in basic and acidic residues; the sequence is RSPRRSRDPGYDHLWD.

In terms of assembly, found in a complex with cytochrome c mRNA and various ribosomal proteins. Interacts with C1QBP. Interacts with ELAVL1. Interacts with BID. Post-translationally, phosphorylation is essential for its mitochondrial localization and regulates its interaction with C1QBP. In terms of tissue distribution, ubiquitous. Epressed in several cancer cell lines of differing origin.

The protein resides in the cell membrane. The protein localises to the mitochondrion. It localises to the mitochondrion membrane. Functionally, controls the stability of the leptin mRNA harboring an AU-rich element (ARE) in its 3' UTR, in cooperation with the RNA stabilizer ELAVL1. Decreases the stability of the leptin mRNA by antagonizing the function of ELAVL1 by inducing its atypical recruitment from the nucleus to the cytosol. Binds to cardiolipin (CL), phosphatidic acid (PA), phosphatidylinositol 4-phosphate (PtdIns(4)P) and phosphatidylserine (PS). Promotes apoptosis by enhancing BAX-BAK hetero-oligomerization via interaction with BID in colon cancer cells. The sequence is that of Pleckstrin homology domain-containing family N member 1 (PLEKHN1) from Homo sapiens (Human).